The chain runs to 281 residues: Nhr-229 coiled coil domain containing nccd-1 (281 aa).

This Caenorhabditis elegans protein is Nhr-229 coiled coil domain containing nccd-1.